Consider the following 333-residue polypeptide: Acetoin:2,6-dichlorophenolindophenol oxidoreductase subunit alpha (333 aa).

Tetramer of 2 alpha and 2 beta subunits. It depends on thiamine diphosphate as a cofactor.

It participates in ketone degradation; acetoin degradation. In terms of biological role, catalyzes the 2,6-dichlorophenolindophenol-dependent cleavage of acetoin into acetate and acetaldehyde, in vitro. The alpha subunit is probably the catalytic subunit of the enzyme. The sequence is that of Acetoin:2,6-dichlorophenolindophenol oxidoreductase subunit alpha (acoA) from Cupriavidus necator (strain ATCC 17699 / DSM 428 / KCTC 22496 / NCIMB 10442 / H16 / Stanier 337) (Ralstonia eutropha).